The primary structure comprises 673 residues: DNA ligase (673 aa).

NAD(+) contacts are provided by residues 38–42 (DSVYD), 87–88 (SL), and Glu119. Catalysis depends on Lys121, which acts as the N6-AMP-lysine intermediate. Residues Arg142, Glu179, Lys296, and Lys320 each coordinate NAD(+). The Zn(2+) site is built by Cys414, Cys417, Cys432, and Cys438. The BRCT domain occupies 595-673 (VVKSEIAGKT…EEAFLKLLKS (79 aa)).

The protein belongs to the NAD-dependent DNA ligase family. LigA subfamily. It depends on Mg(2+) as a cofactor. Mn(2+) is required as a cofactor.

It carries out the reaction NAD(+) + (deoxyribonucleotide)n-3'-hydroxyl + 5'-phospho-(deoxyribonucleotide)m = (deoxyribonucleotide)n+m + AMP + beta-nicotinamide D-nucleotide.. Its function is as follows. DNA ligase that catalyzes the formation of phosphodiester linkages between 5'-phosphoryl and 3'-hydroxyl groups in double-stranded DNA using NAD as a coenzyme and as the energy source for the reaction. It is essential for DNA replication and repair of damaged DNA. The polypeptide is DNA ligase (Coxiella burnetii (strain CbuK_Q154) (Coxiella burnetii (strain Q154))).